The chain runs to 179 residues: Large ribosomal subunit protein uL5 (179 aa).

This sequence belongs to the universal ribosomal protein uL5 family. Part of the 50S ribosomal subunit; part of the 5S rRNA/L5/L18/L25 subcomplex. Contacts the 5S rRNA and the P site tRNA. Forms a bridge to the 30S subunit in the 70S ribosome.

This is one of the proteins that bind and probably mediate the attachment of the 5S RNA into the large ribosomal subunit, where it forms part of the central protuberance. In the 70S ribosome it contacts protein S13 of the 30S subunit (bridge B1b), connecting the 2 subunits; this bridge is implicated in subunit movement. Contacts the P site tRNA; the 5S rRNA and some of its associated proteins might help stabilize positioning of ribosome-bound tRNAs. The protein is Large ribosomal subunit protein uL5 of Proteus mirabilis (strain HI4320).